A 283-amino-acid polypeptide reads, in one-letter code: Elongation factor Ts (283 aa).

The tract at residues 82–85 is involved in Mg(2+) ion dislocation from EF-Tu; sequence TDFV.

This sequence belongs to the EF-Ts family.

It localises to the cytoplasm. Its function is as follows. Associates with the EF-Tu.GDP complex and induces the exchange of GDP to GTP. It remains bound to the aminoacyl-tRNA.EF-Tu.GTP complex up to the GTP hydrolysis stage on the ribosome. The polypeptide is Elongation factor Ts (Photorhabdus laumondii subsp. laumondii (strain DSM 15139 / CIP 105565 / TT01) (Photorhabdus luminescens subsp. laumondii)).